Consider the following 395-residue polypeptide: GA-binding protein subunit beta-1 (395 aa).

An N-acetylserine modification is found at Ser2. ANK repeat units follow at residues 5-34 and 37-66; these read DLGKKLLEAARAGQDDEVRILMANGAPFTT and LGTSPLHLAAQYGHYSTTEVLLRAGVSRDA. Lys69 carries the N6-acetyllysine modification. ANK repeat units lie at residues 70-99, 103-132, and 136-166; these read VDRTPLHMAASEGHASIVEVLLKHGADVNA, LKMTALHWATEHNHQEVVELLIKYGADVHT, and FCKTAFDISIDNGNEDLAEILQIAMQNQINT. Residues 258 to 327 form a transcription activation and HCFC1 interaction region; the sequence is DGAIQQVVSS…ETVISEEPPA (70 aa). Lys352 and Lys381 each carry N6-acetyllysine.

As to quaternary structure, heterotetramer of two alpha and two beta subunits. Interacts with HCFC1, causing repression of transcriptional activity. Post-translationally, acetylated by EP300/p300. Deacetylated by SIRT7, promoting heterotetramerization and activity.

The protein localises to the nucleus. Functionally, transcription factor capable of interacting with purine rich repeats (GA repeats). Acts as a master regulator of nuclear-encoded mitochondrial genes. (Microbial infection) Necessary for the expression of the Adenovirus E4 gene. The chain is GA-binding protein subunit beta-1 (GABPB1) from Homo sapiens (Human).